We begin with the raw amino-acid sequence, 636 residues long: Chaperone protein HtpG (636 aa).

Residues 1 to 344 (MTMSVETQKE…SNDLSLNVSR (344 aa)) form an a; substrate-binding region. The segment at 345-561 (EILQKDPIID…EQDLGMQMRQ (217 aa)) is b. The segment at 562-636 (ILEASGQKVP…LNKLLVELSV (75 aa)) is c.

Belongs to the heat shock protein 90 family. Homodimer.

The protein localises to the cytoplasm. Molecular chaperone. Has ATPase activity. This is Chaperone protein HtpG from Pseudomonas fluorescens (strain SBW25).